The sequence spans 424 residues: Light-independent protochlorophyllide reductase subunit N (424 aa).

[4Fe-4S] cluster-binding residues include cysteine 16, cysteine 41, and cysteine 102.

It belongs to the BchN/ChlN family. In terms of assembly, protochlorophyllide reductase is composed of three subunits; ChlL, ChlN and ChlB. Forms a heterotetramer of two ChlB and two ChlN subunits. [4Fe-4S] cluster serves as cofactor.

It catalyses the reaction chlorophyllide a + oxidized 2[4Fe-4S]-[ferredoxin] + 2 ADP + 2 phosphate = protochlorophyllide a + reduced 2[4Fe-4S]-[ferredoxin] + 2 ATP + 2 H2O. It participates in porphyrin-containing compound metabolism; chlorophyll biosynthesis (light-independent). Functionally, component of the dark-operative protochlorophyllide reductase (DPOR) that uses Mg-ATP and reduced ferredoxin to reduce ring D of protochlorophyllide (Pchlide) to form chlorophyllide a (Chlide). This reaction is light-independent. The NB-protein (ChlN-ChlB) is the catalytic component of the complex. This is Light-independent protochlorophyllide reductase subunit N from Synechococcus sp. (strain WH7803).